A 466-amino-acid polypeptide reads, in one-letter code: Cysteine--tRNA ligase (466 aa).

Cys-27 provides a ligand contact to Zn(2+). Residues 29 to 39 (PTVYNYFHIGN) carry the 'HIGH' region motif. Zn(2+) is bound by residues Cys-207, His-232, and Glu-236. The short motif at 264–268 (KMSKS) is the 'KMSKS' region element. Lys-267 lines the ATP pocket.

This sequence belongs to the class-I aminoacyl-tRNA synthetase family. As to quaternary structure, monomer. Requires Zn(2+) as cofactor.

It is found in the cytoplasm. The enzyme catalyses tRNA(Cys) + L-cysteine + ATP = L-cysteinyl-tRNA(Cys) + AMP + diphosphate. This is Cysteine--tRNA ligase from Clostridium novyi (strain NT).